Reading from the N-terminus, the 103-residue chain is Small ribosomal subunit protein uS10 (103 aa).

This sequence belongs to the universal ribosomal protein uS10 family. As to quaternary structure, part of the 30S ribosomal subunit.

Its function is as follows. Involved in the binding of tRNA to the ribosomes. The sequence is that of Small ribosomal subunit protein uS10 from Polynucleobacter necessarius subsp. necessarius (strain STIR1).